The sequence spans 226 residues: Ribonuclease 3 (226 aa).

Positions 7 to 129 constitute an RNase III domain; sequence LPRLCRTLSY…IIGAVYLDSD (123 aa). Residue glutamate 42 coordinates Mg(2+). Residue aspartate 46 is part of the active site. Mg(2+) contacts are provided by aspartate 115 and glutamate 118. Glutamate 118 is a catalytic residue. The 71-residue stretch at 156 to 226 folds into the DRBM domain; the sequence is DAKTLLQEHL…AAQVLELLKK (71 aa).

This sequence belongs to the ribonuclease III family. In terms of assembly, homodimer. Requires Mg(2+) as cofactor.

Its subcellular location is the cytoplasm. The enzyme catalyses Endonucleolytic cleavage to 5'-phosphomonoester.. In terms of biological role, digests double-stranded RNA. Involved in the processing of primary rRNA transcript to yield the immediate precursors to the large and small rRNAs (23S and 16S). Processes some mRNAs, and tRNAs when they are encoded in the rRNA operon. Processes pre-crRNA and tracrRNA of type II CRISPR loci if present in the organism. The sequence is that of Ribonuclease 3 from Shewanella baltica (strain OS223).